A 479-amino-acid chain; its full sequence is HSPB1-associated protein 1 (479 aa).

The interval 1 to 25 is disordered; sequence MEAGCEGSSPQTLGERTMGEEGERV. Residues 88-208 are interaction with HSPB1; sequence ETECSYVDAT…EDTPFLYPTR (121 aa). In terms of domain architecture, JmjC spans 124–288; it reads WAYADYKYFV…HLARVEEAVT (165 aa). The segment at 347-412 is disordered; it reads PRANGEEPGV…GDSQECTSRN (66 aa). Positions 356–369 are enriched in basic and acidic residues; the sequence is VQEHMEVEQARDPS.

As to quaternary structure, interacts with CRYAB and HSPB1. In terms of tissue distribution, widely expressed. Highly expressed by Sertoli cells in testis (at protein level).

It localises to the cytoplasm. Its function is as follows. May play a role in cellular stress response. The polypeptide is HSPB1-associated protein 1 (Hspbap1) (Rattus norvegicus (Rat)).